We begin with the raw amino-acid sequence, 689 residues long: Glycine--tRNA ligase beta subunit (689 aa).

This sequence belongs to the class-II aminoacyl-tRNA synthetase family. As to quaternary structure, tetramer of two alpha and two beta subunits.

It localises to the cytoplasm. The enzyme catalyses tRNA(Gly) + glycine + ATP = glycyl-tRNA(Gly) + AMP + diphosphate. The polypeptide is Glycine--tRNA ligase beta subunit (Acinetobacter baumannii (strain AB307-0294)).